A 1574-amino-acid chain; its full sequence is MPVRAEARAAWRVVALALLLLPAMPAASPPLTPRPLQPSMPHVCAEQKLTLVGHRQPCVQAFSRIVPVWRRTGCAQQAWCIGQERRTVYYMSYRQVYATEARTVFRCCPGWSQKPGQEGCLSDVDECASANGGCEGPCCNTVGGFYCRCPPGYQLQGDGKTCQDVDECRAHNGGCQHRCVNTPGSYLCECKPGFRLHTDGRTCLAISSCTLGNGGCQHQCVQLTVTQHRCQCRPQYQLQEDGRRCVRRSPCAEGNGGCMHICQELRGLAHCGCHPGYQLAADRKTCEDVDECALGLAQCAHGCLNTQGSFKCVCHAGYELGADGRQCYRIEMEIVNSCEAGNGGCSHGCSHTSTGPLCTCPRGYELDEDQKTCIDIDDCANSPCCQQACANTPGGYECSCFAGYRLNTDGCGCEDVDECASGHGGCEHHCSNLAGSFQCFCEAGYRLDEDRRGCTSLEESVVDLDGRLPFVRPLPHIAVLRDELPRLFQDDYGAEEEAAAAELRGEHTLTEKFVCLDHSFGHDCSLTCDDCRNGGTCFPGQDGCDCPEGWTGIICNETCPPDTFGKNCSSPCTCQNGGTCDPVLGACRCPPGVSGAHCEDGCPKGFYGKHCRKKCHCANRGRCHRLYGACLCDPGLYGRFCHLACPPWAFGPGCSEDCLCEQSHTRSCNPKDGSCSCKAGFQGERCQAECESGFFGPGCRHRCTCQPGVACDPVSGECRTQCPPGYQGEDCGQECPVGTFGVNCSGSCSCVGAPCHRVTGECLCPPGKTGEDCGADCPEGRWGLGCQEICPACEHGASCNPETGTCLCLPGFVGSRCQDTCSAGWYGTGCQIRCACANDGHCDPTTGRCSCAPGWTGLSCQRACDSGHWGPDCIHPCNCSAGHGNCDAVSGLCLCEAGYEGPRCEQSCRQGYYGPSCEQKCRCEHGAACDHVSGACTCPAGWRGSFCEHACPAGFFGLDCDSACNCSAGAPCDAVTGSCICPAGRWGPRCAQSCPPLTFGLNCSQICTCFNGASCDSVTGQCHCAPGWMGPTCLQACPPGLYGKNCQHSCLCRNGGRCDPILGQCTCPEGWTGLACENECLPGHYAAGCQLNCSCLHGGICDRLTGHCLCPAGWTGDKCQSSCVSGTFGVHCEEHCACRKGASCHHVTGACFCPPGWRGPHCEQACPRGWFGEACAQRCLCPTNASCHHVTGECRCPPGFTGLSCEQACQPGTFGKDCEHLCQCPGETWACDPASGVCTCAAGYHGTGCLQRCPSGRYGPGCEHICKCLNGGTCDPATGACYCPAGFLGADCSLACPQGRFGPSCAHVCACRQGAACDPVSGACICSPGKTGVRCEHGCPQDRFGKGCELKCACRNGGLCHATNGSCSCPLGWMGPHCEHACPAGRYGAACLLECFCQNNGSCEPTTGACLCGPGFYGQACEHSCPSGFHGPGCQRVCECQQGAPCDPVSGQCLCPAGFHGQFCEKGCESGSFGDGCLQQCNCHTGVPCDPISGLCLCPPGRTGAACDLDCRRGRFGPGCALRCDCGGGADCDPISGQCHCVDSYMGPTCREVPTQISSSRPAPQHPSSRAMKH.

An N-terminal signal peptide occupies residues 1–27 (MPVRAEARAAWRVVALALLLLPAMPAA). Residues 40–122 (MPHVCAEQKL…QKPGQEGCLS (83 aa)) enclose the EMI domain. 99 disulfide bridges follow: Cys-44-Cys-108, Cys-74-Cys-80, Cys-107-Cys-120, Cys-127-Cys-138, Cys-134-Cys-147, Cys-149-Cys-162, Cys-168-Cys-179, Cys-175-Cys-188, Cys-190-Cys-203, Cys-209-Cys-220, Cys-216-Cys-230, Cys-232-Cys-245, Cys-251-Cys-262, Cys-258-Cys-271, Cys-273-Cys-286, Cys-292-Cys-303, Cys-299-Cys-312, Cys-314-Cys-327, Cys-338-Cys-349, Cys-345-Cys-358, Cys-360-Cys-373, Cys-379-Cys-389, Cys-385-Cys-398, Cys-400-Cys-411, Cys-419-Cys-430, Cys-426-Cys-439, Cys-441-Cys-454, Cys-524-Cys-537, Cys-531-Cys-544, Cys-546-Cys-555, Cys-568-Cys-580, Cys-574-Cys-587, Cys-589-Cys-598, Cys-611-Cys-623, Cys-617-Cys-630, Cys-632-Cys-641, Cys-654-Cys-668, Cys-660-Cys-675, Cys-677-Cys-686, Cys-699-Cys-711, Cys-705-Cys-718, Cys-722-Cys-731, Cys-744-Cys-755, Cys-750-Cys-762, Cys-764-Cys-773, Cys-786-Cys-799, Cys-793-Cys-806, Cys-808-Cys-817, Cys-830-Cys-842, Cys-836-Cys-849, Cys-851-Cys-860, Cys-873-Cys-886, Cys-879-Cys-893, Cys-895-Cys-904, Cys-917-Cys-929, Cys-923-Cys-936, Cys-938-Cys-947, Cys-960-Cys-972, Cys-966-Cys-979, Cys-981-Cys-990, Cys-1003-Cys-1015, Cys-1009-Cys-1022, Cys-1024-Cys-1033, Cys-1046-Cys-1058, Cys-1052-Cys-1065, Cys-1067-Cys-1076, Cys-1089-Cys-1101, Cys-1095-Cys-1108, Cys-1110-Cys-1119, Cys-1132-Cys-1144, Cys-1138-Cys-1151, Cys-1153-Cys-1162, Cys-1175-Cys-1187, Cys-1181-Cys-1194, Cys-1196-Cys-1205, Cys-1218-Cys-1231, Cys-1224-Cys-1238, Cys-1240-Cys-1249, Cys-1262-Cys-1274, Cys-1268-Cys-1281, Cys-1283-Cys-1292, Cys-1305-Cys-1317, Cys-1311-Cys-1324, Cys-1326-Cys-1335, Cys-1348-Cys-1360, Cys-1354-Cys-1367, Cys-1369-Cys-1378, Cys-1391-Cys-1403, Cys-1397-Cys-1410, Cys-1412-Cys-1421, Cys-1434-Cys-1446, Cys-1440-Cys-1453, Cys-1455-Cys-1464, Cys-1477-Cys-1489, Cys-1483-Cys-1496, Cys-1498-Cys-1507, Cys-1520-Cys-1532, Cys-1526-Cys-1539, and Cys-1541-Cys-1550. An EGF-like 1; calcium-binding domain is found at 123 to 163 (DVDECASANGGCEGPCCNTVGGFYCRCPPGYQLQGDGKTCQ). Residues 164-204 (DVDECRAHNGGCQHRCVNTPGSYLCECKPGFRLHTDGRTCL) form the EGF-like 2; calcium-binding domain. EGF-like domains follow at residues 205 to 246 (AISS…RRCV) and 247 to 287 (RRSP…KTCE). The region spanning 288–328 (DVDECALGLAQCAHGCLNTQGSFKCVCHAGYELGADGRQCY) is the EGF-like 5; calcium-binding domain. 2 consecutive EGF-like domains span residues 334–374 (IVNS…KTCI) and 375–412 (DIDDCANSPCCQQACANTPGGYECSCFAGYRLNTDGCG). The EGF-like 8; calcium-binding domain maps to 415 to 455 (DVDECASGHGGCEHHCSNLAGSFQCFCEAGYRLDEDRRGCT). EGF-like domains lie at 520 to 556 (FGHDCSLTCDDCRNGGTCFPGQDGCDCPEGWTGIICN), 564 to 599 (FGKNCSSPCTCQNGGTCDPVLGACRCPPGVSGAHCE), 607 to 642 (YGKHCRKKCHCANRGRCHRLYGACLCDPGLYGRFCH), 650 to 687 (FGPGCSEDCLCEQSHTRSCNPKDGSCSCKAGFQGERCQ), 695 to 732 (FGPGCRHRCTCQPGVACDPVSGECRTQCPPGYQGEDCG), 740 to 774 (FGVNCSGSCSCVGAPCHRVTGECLCPPGKTGEDCG), 782 to 818 (WGLGCQEICPACEHGASCNPETGTCLCLPGFVGSRCQ), 826 to 861 (YGTGCQIRCACANDGHCDPTTGRCSCAPGWTGLSCQ), 869 to 905 (WGPDCIHPCNCSAGHGNCDAVSGLCLCEAGYEGPRCE), 913 to 948 (YGPSCEQKCRCEHGAACDHVSGACTCPAGWRGSFCE), 956 to 991 (FGLDCDSACNCSAGAPCDAVTGSCICPAGRWGPRCA), 999 to 1034 (FGLNCSQICTCFNGASCDSVTGQCHCAPGWMGPTCL), 1042 to 1077 (YGKNCQHSCLCRNGGRCDPILGQCTCPEGWTGLACE), 1085 to 1120 (YAAGCQLNCSCLHGGICDRLTGHCLCPAGWTGDKCQ), 1128 to 1163 (FGVHCEEHCACRKGASCHHVTGACFCPPGWRGPHCE), 1171 to 1206 (FGEACAQRCLCPTNASCHHVTGECRCPPGFTGLSCE), 1214 to 1250 (FGKDCEHLCQCPGETWACDPASGVCTCAAGYHGTGCL), 1258 to 1293 (YGPGCEHICKCLNGGTCDPATGACYCPAGFLGADCS), 1301 to 1336 (FGPSCAHVCACRQGAACDPVSGACICSPGKTGVRCE), 1344 to 1379 (FGKGCELKCACRNGGLCHATNGSCSCPLGWMGPHCE), 1387 to 1422 (YGAACLLECFCQNNGSCEPTTGACLCGPGFYGQACE), 1430 to 1465 (HGPGCQRVCECQQGAPCDPVSGQCLCPAGFHGQFCE), 1473 to 1508 (FGDGCLQQCNCHTGVPCDPISGLCLCPPGRTGAACD), and 1516 to 1551 (FGPGCALRCDCGGGADCDPISGQCHCVDSYMGPTCR). The span at 1555–1568 (TQISSSRPAPQHPS) shows a compositional bias: polar residues. The interval 1555 to 1574 (TQISSSRPAPQHPSSRAMKH) is disordered.

In terms of tissue distribution, expressed in lung.

The protein localises to the secreted. In Rattus norvegicus (Rat), this protein is Multiple epidermal growth factor-like domains protein 6 (Megf6).